The chain runs to 170 residues: Large ribosomal subunit protein uL5 (170 aa).

It belongs to the universal ribosomal protein uL5 family. In terms of assembly, part of the 50S ribosomal subunit; contacts the 5S rRNA and probably tRNA. Forms a bridge to the 30S subunit in the 70S ribosome.

This is one of the proteins that bind and probably mediate the attachment of the 5S RNA into the large ribosomal subunit, where it forms part of the central protuberance. In the 70S ribosome it contacts protein S13 of the 30S subunit (bridge B1b), connecting the 2 subunits; this bridge is implicated in subunit movement. May contact the P site tRNA; the 5S rRNA and some of its associated proteins might help stabilize positioning of ribosome-bound tRNAs. This is Large ribosomal subunit protein uL5 from Thermoplasma acidophilum (strain ATCC 25905 / DSM 1728 / JCM 9062 / NBRC 15155 / AMRC-C165).